The following is a 250-amino-acid chain: Small ribosomal subunit protein uS2 (250 aa).

It belongs to the universal ribosomal protein uS2 family.

This chain is Small ribosomal subunit protein uS2, found in Chloroherpeton thalassium (strain ATCC 35110 / GB-78).